The chain runs to 408 residues: Putative transporter AmpG 2 (408 aa).

Transmembrane regions (helical) follow at residues 10-30 (YISN…IYLL), 49-69 (IGLF…GPLL), 84-104 (YCLI…TNFN), 109-129 (FIPF…YDML), 154-174 (FRIG…IISW), 177-197 (VYRS…IYPL), 224-244 (WLII…LSIM), 261-281 (LGYK…GGFL), 294-311 (ALIY…LYFY), 315-337 (ITSL…SPFF), 353-373 (IALI…ISGY), and 378-398 (LGWT…YILI).

This sequence belongs to the major facilitator superfamily.

It localises to the cell inner membrane. In Rickettsia felis (strain ATCC VR-1525 / URRWXCal2) (Rickettsia azadi), this protein is Putative transporter AmpG 2 (ampG2).